Reading from the N-terminus, the 182-residue chain is Small ribosomal subunit protein uS4 (182 aa).

Disordered regions lie at residues 1–23 and 158–182; these read MGHP…ADRI and SSVA…KDEE. Residues 103–170 form the S4 RNA-binding domain; it reads RRLQSLVFKR…AKQFETQETE (68 aa). A compositionally biased stretch (acidic residues) spans 167 to 182; the sequence is QETEEVAAEEEPKDEE.

It belongs to the universal ribosomal protein uS4 family. As to quaternary structure, part of the 30S ribosomal subunit. Contacts protein S5. The interaction surface between S4 and S5 is involved in control of translational fidelity.

Functionally, one of the primary rRNA binding proteins, it binds directly to 16S rRNA where it nucleates assembly of the body of the 30S subunit. With S5 and S12 plays an important role in translational accuracy. This chain is Small ribosomal subunit protein uS4, found in Methanosphaera stadtmanae (strain ATCC 43021 / DSM 3091 / JCM 11832 / MCB-3).